We begin with the raw amino-acid sequence, 467 residues long: Glutamate--tRNA ligase (467 aa).

A 'HIGH' region motif is present at residues 10–20; the sequence is PSPTGHLHIGG. Zn(2+) is bound by residues cysteine 99, cysteine 101, cysteine 126, and glutamate 128. Positions 236-240 match the 'KMSKS' region motif; the sequence is RLSKR. Lysine 239 serves as a coordination point for ATP.

It belongs to the class-I aminoacyl-tRNA synthetase family. Glutamate--tRNA ligase type 1 subfamily. Monomer. Zn(2+) serves as cofactor.

It localises to the cytoplasm. The enzyme catalyses tRNA(Glu) + L-glutamate + ATP = L-glutamyl-tRNA(Glu) + AMP + diphosphate. Functionally, catalyzes the attachment of glutamate to tRNA(Glu) in a two-step reaction: glutamate is first activated by ATP to form Glu-AMP and then transferred to the acceptor end of tRNA(Glu). The sequence is that of Glutamate--tRNA ligase from Desulfosudis oleivorans (strain DSM 6200 / JCM 39069 / Hxd3) (Desulfococcus oleovorans).